The primary structure comprises 261 residues: Cytosolic Fe-S cluster assembly factor Nubp2 homolog (261 aa).

14–21 (GKGGVGKS) serves as a coordination point for ATP. [4Fe-4S] cluster contacts are provided by Cys-188 and Cys-191.

It belongs to the Mrp/NBP35 ATP-binding proteins family. NUBP2/CFD1 subfamily. In terms of assembly, heterotetramer of 2 Nubp1 and 2 Nubp2 chains. [4Fe-4S] cluster is required as a cofactor.

It is found in the cytoplasm. Functionally, component of the cytosolic iron-sulfur (Fe/S) protein assembly (CIA) machinery. Required for maturation of extramitochondrial Fe-S proteins. The Nubp1-Nubp2 heterotetramer forms a Fe-S scaffold complex, mediating the de novo assembly of an Fe-S cluster and its transfer to target apoproteins. In Drosophila ananassae (Fruit fly), this protein is Cytosolic Fe-S cluster assembly factor Nubp2 homolog.